Reading from the N-terminus, the 189-residue chain is Ion-translocating oxidoreductase complex subunit B (189 aa).

Residues 1–26 form a hydrophobic region; sequence MSQVIIAIILLGLLALAFGALLGYAA. The 4Fe-4S domain maps to 32–90; it reads EGDPIIDQAEALLPQTQCGQCGYPGCRPYAEAIANGEKINKCPPGGTATMEKLAELMGV. 12 residues coordinate [4Fe-4S] cluster: Cys49, Cys52, Cys57, Cys73, Cys114, Cys117, Cys120, Cys124, Cys144, Cys147, Cys150, and Cys154. 2 consecutive 4Fe-4S ferredoxin-type domains span residues 105–134 and 135–164; these read KVAFIREAECIGCTKCIQACPVDAILGTGK and QMHTVITDYCTGCDLCVEPCPVDCIDMIPV.

Belongs to the 4Fe4S bacterial-type ferredoxin family. RnfB subfamily. The complex is composed of six subunits: RnfA, RnfB, RnfC, RnfD, RnfE and RnfG. [4Fe-4S] cluster serves as cofactor.

It localises to the cell inner membrane. In terms of biological role, part of a membrane-bound complex that couples electron transfer with translocation of ions across the membrane. In Shewanella loihica (strain ATCC BAA-1088 / PV-4), this protein is Ion-translocating oxidoreductase complex subunit B.